Here is a 56-residue protein sequence, read N- to C-terminus: Large ribosomal subunit protein eL40 (56 aa).

Belongs to the eukaryotic ribosomal protein eL40 family.

This chain is Large ribosomal subunit protein eL40, found in Metallosphaera sedula (strain ATCC 51363 / DSM 5348 / JCM 9185 / NBRC 15509 / TH2).